Consider the following 336-residue polypeptide: Holliday junction branch migration complex subunit RuvB (336 aa).

Residues 1–183 (MTEEHLTSQE…FGIVEHMQYY (183 aa)) are large ATPase domain (RuvB-L). ATP is bound by residues leucine 22, arginine 23, glycine 64, lysine 67, threonine 68, threonine 69, 130–132 (EDF), arginine 173, tyrosine 183, and arginine 220. Threonine 68 is a Mg(2+) binding site. Residues 184-254 (QVEDLEKIIL…TTAMALKQLQ (71 aa)) are small ATPAse domain (RuvB-S). Residues 257 to 336 (SAGLDQTDRK…LNLPLPGEEE (80 aa)) form a head domain (RuvB-H) region. Residues arginine 293 and arginine 317 each coordinate DNA.

This sequence belongs to the RuvB family. In terms of assembly, homohexamer. Forms an RuvA(8)-RuvB(12)-Holliday junction (HJ) complex. HJ DNA is sandwiched between 2 RuvA tetramers; dsDNA enters through RuvA and exits via RuvB. An RuvB hexamer assembles on each DNA strand where it exits the tetramer. Each RuvB hexamer is contacted by two RuvA subunits (via domain III) on 2 adjacent RuvB subunits; this complex drives branch migration. In the full resolvosome a probable DNA-RuvA(4)-RuvB(12)-RuvC(2) complex forms which resolves the HJ.

The protein localises to the cytoplasm. The catalysed reaction is ATP + H2O = ADP + phosphate + H(+). Functionally, the RuvA-RuvB-RuvC complex processes Holliday junction (HJ) DNA during genetic recombination and DNA repair, while the RuvA-RuvB complex plays an important role in the rescue of blocked DNA replication forks via replication fork reversal (RFR). RuvA specifically binds to HJ cruciform DNA, conferring on it an open structure. The RuvB hexamer acts as an ATP-dependent pump, pulling dsDNA into and through the RuvAB complex. RuvB forms 2 homohexamers on either side of HJ DNA bound by 1 or 2 RuvA tetramers; 4 subunits per hexamer contact DNA at a time. Coordinated motions by a converter formed by DNA-disengaged RuvB subunits stimulates ATP hydrolysis and nucleotide exchange. Immobilization of the converter enables RuvB to convert the ATP-contained energy into a lever motion, pulling 2 nucleotides of DNA out of the RuvA tetramer per ATP hydrolyzed, thus driving DNA branch migration. The RuvB motors rotate together with the DNA substrate, which together with the progressing nucleotide cycle form the mechanistic basis for DNA recombination by continuous HJ branch migration. Branch migration allows RuvC to scan DNA until it finds its consensus sequence, where it cleaves and resolves cruciform DNA. This is Holliday junction branch migration complex subunit RuvB from Lactobacillus delbrueckii subsp. bulgaricus (strain ATCC 11842 / DSM 20081 / BCRC 10696 / JCM 1002 / NBRC 13953 / NCIMB 11778 / NCTC 12712 / WDCM 00102 / Lb 14).